Consider the following 397-residue polypeptide: Enoyl-[acyl-carrier-protein] reductase [NADH] (397 aa).

NAD(+)-binding positions include Gly-48–Tyr-53, Phe-74–Glu-75, Asp-111–Ala-112, and Leu-139–Ala-140. A substrate-binding site is contributed by Tyr-225. Catalysis depends on Tyr-235, which acts as the Proton donor. NAD(+) contacts are provided by residues Lys-244 and Val-273–Thr-275.

Belongs to the TER reductase family. In terms of assembly, monomer.

It catalyses the reaction a 2,3-saturated acyl-[ACP] + NAD(+) = a (2E)-enoyl-[ACP] + NADH + H(+). It participates in lipid metabolism; fatty acid biosynthesis. Involved in the final reduction of the elongation cycle of fatty acid synthesis (FAS II). Catalyzes the reduction of a carbon-carbon double bond in an enoyl moiety that is covalently linked to an acyl carrier protein (ACP). The sequence is that of Enoyl-[acyl-carrier-protein] reductase [NADH] from Pseudoalteromonas translucida (strain TAC 125).